The following is a 297-amino-acid chain: Adrenocorticotropic hormone receptor (297 aa).

Topologically, residues 1–23 (MKHIITPYEHTNDTARNNSDCPD) are extracellular. N12 and N17 each carry an N-linked (GlcNAc...) asparagine glycan. 2 cysteine pairs are disulfide-bonded: C21/C253 and C245/C251. The helical transmembrane segment at 24 to 49 (VVLPEEIFFTISIIGVLENLIVLLAV) threads the bilayer. At 50-58 (VKNKNLQCP) the chain is on the cytoplasmic side. The chain crosses the membrane as a helical span at residues 59–79 (MYFFICSLAISDMLGSLYKIL). The Extracellular portion of the chain corresponds to 80–104 (ENILIMFRNRGYLQPRGNFESTADD). A helical membrane pass occupies residues 105–126 (IIDCMFILSLLGSIFSLSVIAA). Residues 127–147 (DRYITIFHALQYHSIVTMRRT) lie on the Cytoplasmic side of the membrane. Residues 148-168 (IITLTVIWIFCTGSGIAMVIF) traverse the membrane as a helical segment. The Extracellular segment spans residues 169-180 (SHHVPTVLTFTS). Residues 181 to 199 (LFPLMLVFILCLYIHMFLL) form a helical membrane-spanning segment. Residues 200 to 217 (ARSHARKISTLPRANMKG) are Cytoplasmic-facing. A helical membrane pass occupies residues 218-244 (AITLTILLGVFIFCWAPFILHVLLMTF). Residues 245 to 256 (CPNNPYCVCYMS) are Extracellular-facing. A helical membrane pass occupies residues 257 to 278 (LFQINGMLIMCNAVIDPFIYAF). Topologically, residues 279 to 297 (RSPELRDAFKKMFSCHRYQ) are cytoplasmic. Residue C293 is the site of S-palmitoyl cysteine attachment.

This sequence belongs to the G-protein coupled receptor 1 family. As to quaternary structure, homodimer. Interacts with corticotropin (ACTH). Interacts with MRAP; this interaction targets MC2R to the plasma membrane. Interacts with MRAP2; competing with MRAP for binding to MC2R and impairing the binding of corticotropin (ACTH). In terms of processing, ubiquitinated by MGRN1 that may be involved in post-endocytic trafficking and/or degradation of internalized receptor.

It is found in the cell membrane. In terms of biological role, hormone receptor primarily expressed in adrenal cortex that plays a key role in regulating adrenocortical function. Upon corticotropin (ACTH) binding, facilitates the release of adrenal glucocorticoids, including cortisol and corticosterone. In addition, MC2R is required for fetal and neonatal adrenal gland development. Mechanistically, activates adenylate cyclase (cAMP), the MAPK cascade as well as the cAMP-dependent protein kinase A pathway leading to steroidogenic factor 1/NR5A1-mediated transcriptional activation. The polypeptide is Adrenocorticotropic hormone receptor (MC2R) (Mesocricetus auratus (Golden hamster)).